The primary structure comprises 439 residues: MVVSRGKTPNAQETFLQMAQASGLRGRILITVGLLILCRLGIFIPVPGIDRVAFSNDLQGNANLGGVIGFLDIFSGGGLSALGVFALGILPYINASIILQLLTAAVPALEDLQKNEGEAGRRKIAQLTRYVSLGWALLQSIVIAVWVTRYAVTPGPLFTIQTALALVAGSMFVMWISELITERGIGNGASLLIFLNIVATLPRSLQQTLELAQSGDRSTVGGIVILLIVFLATIVGIVFVQEGTRRIPVVSARRQVGNRVYSERSSYLPLRLNQGGVMPIIFASAILVLPFSLANFTSNEVVLRIANYLSPNGPTPWIYALFYLVLIVAFSYFYSSLILNPVDLAQNLKKMGSSIPGVRPGRATSQYVQGVLNRLTILGAVFLGLVAIIPTAVEGATRIRTFQGFGATSLLILVGVAIDTAKQVQTYVISQRYEGMVKD.

10 consecutive transmembrane segments (helical) span residues 28–48 (ILIT…PVPG), 73–93 (IFSG…LPYI), 127–147 (LTRY…AVWV), 156–176 (PLFT…VMWI), 179–199 (LITE…NIVA), 220–240 (VGGI…IVFV), 276–296 (GVMP…LANF), 318–338 (IYAL…SSLI), 375–395 (LTIL…AVEG), and 401–421 (TFQG…IDTA).

It belongs to the SecY/SEC61-alpha family. As to quaternary structure, component of the Sec protein translocase complex. Heterotrimer consisting of SecY, SecE and SecG subunits. The heterotrimers can form oligomers, although 1 heterotrimer is thought to be able to translocate proteins. Interacts with the ribosome. Interacts with SecDF, and other proteins may be involved. Interacts with SecA.

It localises to the cell inner membrane. Its subcellular location is the cellular thylakoid membrane. The central subunit of the protein translocation channel SecYEG. Consists of two halves formed by TMs 1-5 and 6-10. These two domains form a lateral gate at the front which open onto the bilayer between TMs 2 and 7, and are clamped together by SecE at the back. The channel is closed by both a pore ring composed of hydrophobic SecY resides and a short helix (helix 2A) on the extracellular side of the membrane which forms a plug. The plug probably moves laterally to allow the channel to open. The ring and the pore may move independently. This Synechococcus elongatus (strain ATCC 33912 / PCC 7942 / FACHB-805) (Anacystis nidulans R2) protein is Protein translocase subunit SecY.